The chain runs to 440 residues: Trigger factor (440 aa).

The region spanning 163-248 (GMVLTVDFSF…LKEIKKKELP (86 aa)) is the PPIase FKBP-type domain.

The protein belongs to the FKBP-type PPIase family. Tig subfamily.

It localises to the cytoplasm. The catalysed reaction is [protein]-peptidylproline (omega=180) = [protein]-peptidylproline (omega=0). In terms of biological role, involved in protein export. Acts as a chaperone by maintaining the newly synthesized protein in an open conformation. Functions as a peptidyl-prolyl cis-trans isomerase. This chain is Trigger factor, found in Trichlorobacter lovleyi (strain ATCC BAA-1151 / DSM 17278 / SZ) (Geobacter lovleyi).